The primary structure comprises 409 residues: Glutamyl-tRNA reductase (409 aa).

Residues 46 to 49, Ser88, 93 to 95, and Gln99 each bind substrate; these read TCNR and ENE. Cys47 serves as the catalytic Nucleophile. 164-169 contacts NADP(+); it reads GNGMIA.

It belongs to the glutamyl-tRNA reductase family. As to quaternary structure, homodimer.

The catalysed reaction is (S)-4-amino-5-oxopentanoate + tRNA(Glu) + NADP(+) = L-glutamyl-tRNA(Glu) + NADPH + H(+). The protein operates within porphyrin-containing compound metabolism; protoporphyrin-IX biosynthesis; 5-aminolevulinate from L-glutamyl-tRNA(Glu): step 1/2. Its function is as follows. Catalyzes the NADPH-dependent reduction of glutamyl-tRNA(Glu) to glutamate 1-semialdehyde (GSA). In Thermoplasma acidophilum (strain ATCC 25905 / DSM 1728 / JCM 9062 / NBRC 15155 / AMRC-C165), this protein is Glutamyl-tRNA reductase.